The chain runs to 1495 residues: Nuclear pore complex protein NUP160 (1495 aa).

In terms of assembly, part of the nuclear pore complex (NPC). The NPC has an eight-fold symmetrical structure comprising a central transport channel and two rings, the cytoplasmic and nuclear rings, to which eight filaments are attached. The cytoplasmic filaments have loose ends, while the nuclear filaments are joined in a distal ring, forming a nuclear basket. NPCs are highly dynamic in configuration and composition, and can be devided in 3 subcomplexes, the NUP62 subcomplex, the NUP107-160 subcomplex and the NUP93 subcomplex, containing approximately 30 different nucleoporin proteins. Expressed in roots, stems, anthers, siliques and vascular tissues of cotyledons, leaves and hypocotyls.

It localises to the nucleus membrane. It is found in the nucleus. Its subcellular location is the nuclear pore complex. In terms of biological role, contributes to the transfer of mature mRNA from the nucleus to the cytosol. Required for both R gene-mediated and basal disease resistance. RNA export seems to play a critical role in stress responses and regulation of plant growth and development. Required for proper expression of factors associated with auxin signaling. The chain is Nuclear pore complex protein NUP160 from Arabidopsis thaliana (Mouse-ear cress).